A 538-amino-acid chain; its full sequence is Guanine nucleotide-binding protein-like 3 (538 aa).

Residues 1 to 45 (MKRPKLKKASKRMTCHKRYKIQKKVREHHRKLRKEAKKRGHKKPK) are compositionally biased toward basic residues. Positions 1–125 (MKRPKLKKAS…KAKSGKQNPK (125 aa)) are disordered. Residues 2–46 (KRPKLKKASKRMTCHKRYKIQKKVREHHRKLRKEAKKRGHKKPKK) form a basic region. Positions 54–95 (APFKEALLREAELRKQQLEELKQQQKLDRQKEQERKRKLEIS) form a coiled coil. Residues 59 to 94 (ALLREAELRKQQLEELKQQQKLDRQKEQERKRKLEI) show a composition bias toward basic and acidic residues. Lys79 carries the N6-acetyllysine modification. Residue Lys91 forms a Glycyl lysine isopeptide (Lys-Gly) (interchain with G-Cter in SUMO2) linkage. Phosphoserine is present on residues Ser95 and Ser101. Acidic residues predominate over residues 95–110 (SPDDEQSNVETQEESD). Over residues 115-125 (KKAKSGKQNPK) the composition is skewed to basic residues. The 179-residue stretch at 129 to 307 (CQELKKVIEA…IIDSPCFIIS (179 aa)) folds into the CP-type G domain. GTP is bound at residue 176–179 (NKSD). Glycyl lysine isopeptide (Lys-Gly) (interchain with G-Cter in SUMO2) cross-links involve residues Lys177, Lys248, Lys262, and Lys270. Position 256-263 (256-263 (GFPNVGKS)) interacts with GTP. The segment at 277–451 (VGVSMGLTRS…HLTNKILFRS (175 aa)) is intermediate. 300–303 (DSPC) serves as a coordination point for GTP. 2 stretches are compositionally biased toward basic and acidic residues: residues 460-473 (EEKD…KQTE) and 481-491 (QEHVTGEKNAE). The tract at residues 460-532 (EEKDIPEESP…KMSEEDDAYD (73 aa)) is acidic. The disordered stretch occupies residues 460-538 (EEKDIPEESP…DAYDFTTDYI (79 aa)). Phosphoserine is present on residues Ser493, Ser505, and Ser518. Residues 514-524 (PSDRSFILDKM) are compositionally biased toward basic and acidic residues.

It belongs to the TRAFAC class YlqF/YawG GTPase family. As to quaternary structure, interacts with MDM2; this interaction stabilizes MDM2. Interaction with MDM2 occurs in the nucleoplasm and is triggered by a nucleolar release mechanism, such as mitosis-induced nucleolar disassembly. May interact with p53/TP53 via its basic domain. This interaction is most probably indirect and mediated by MDM2-binding. In terms of tissue distribution, expressed in testis.

The protein resides in the nucleus. It is found in the nucleolus. Functionally, may be required to maintain the proliferative capacity of stem cells. Stabilizes MDM2 by preventing its ubiquitination, and hence proteasomal degradation. This chain is Guanine nucleotide-binding protein-like 3 (Gnl3), found in Rattus norvegicus (Rat).